The chain runs to 777 residues: Acyl-CoA dehydrogenase family member 11 (777 aa).

FAD-binding positions include 501 to 511, 509 to 511, 535 to 537, and Ser537; these read FCMTEPDVASS, ASS, and WSS. Residue Ser511 coordinates substrate. 626 to 629 lines the substrate pocket; that stretch reads GPGR. FAD is bound by residues Arg654, Gln724, and 724 to 728; that span reads QVCGG. Gly752 is a binding site for substrate. FAD-binding positions include 753–755 and Glu755; that span reads PDE.

This sequence belongs to the acyl-CoA dehydrogenase family. Homodimer. It depends on FAD as a cofactor.

The protein localises to the peroxisome. It localises to the mitochondrion membrane. The catalysed reaction is a 2,3-saturated acyl-CoA + oxidized [electron-transfer flavoprotein] + H(+) = a (2E)-enoyl-CoA + reduced [electron-transfer flavoprotein]. It catalyses the reaction docosanoyl-CoA + oxidized [electron-transfer flavoprotein] + H(+) = (2E)-docosenoyl-CoA + reduced [electron-transfer flavoprotein]. It carries out the reaction tetracosanoyl-CoA + oxidized [electron-transfer flavoprotein] + H(+) = (2E)-tetracosenoyl-CoA + reduced [electron-transfer flavoprotein]. The enzyme catalyses eicosanoyl-CoA + oxidized [electron-transfer flavoprotein] + H(+) = (2E)-eicosenoyl-CoA + reduced [electron-transfer flavoprotein]. The catalysed reaction is hexacosanoyl-CoA + oxidized [electron-transfer flavoprotein] + H(+) = (2E)-hexacosenoyl-CoA + reduced [electron-transfer flavoprotein]. It catalyses the reaction tricosanoyl-CoA + oxidized [electron-transfer flavoprotein] + H(+) = (2E)-tricosenoyl-CoA + reduced [electron-transfer flavoprotein]. It functions in the pathway lipid metabolism; fatty acid beta-oxidation. Its function is as follows. Acyl-CoA dehydrogenase, that exhibits maximal activity towards saturated C22-CoA. Probably participates in beta-oxydation and energy production but could also play a role in the metabolism of specific fatty acids to control fatty acids composition of cellular lipids in brain. This chain is Acyl-CoA dehydrogenase family member 11 (ACAD11), found in Gallus gallus (Chicken).